Reading from the N-terminus, the 268-residue chain is L-gamma-glutamyl-L-propargylglycine hydroxylase (268 aa).

Requires Fe(2+) as cofactor.

It catalyses the reaction L-gamma-glutamyl-L-propargylglycine + 2-oxoglutarate + O2 = L-gamma-glutamyl-(3R)-L-beta-ethynylserine + succinate + CO2. It participates in amino-acid metabolism. It functions in the pathway antibiotic biosynthesis. Its function is as follows. Involved in the biosynthesis of terminal alkyne-containing amino acids such as L-beta-ethynylserine, that are produced as antibiotics by S.cattleya. Catalyzes the hydroxylation of the dipeptide L-gamma-glutamyl-L-propargylglycine, leading to L-gamma-glutamyl-L-beta-ethynylserine. Cannot use L-propargylglycine as substrate. This chain is L-gamma-glutamyl-L-propargylglycine hydroxylase, found in Streptantibioticus cattleyicolor (strain ATCC 35852 / DSM 46488 / JCM 4925 / NBRC 14057 / NRRL 8057) (Streptomyces cattleya).